The chain runs to 92 residues: Small ribosomal subunit protein uS19 (92 aa).

This sequence belongs to the universal ribosomal protein uS19 family.

Functionally, protein S19 forms a complex with S13 that binds strongly to the 16S ribosomal RNA. This is Small ribosomal subunit protein uS19 from Lachnoclostridium phytofermentans (strain ATCC 700394 / DSM 18823 / ISDg) (Clostridium phytofermentans).